Consider the following 322-residue polypeptide: 4-hydroxy-3-methylbut-2-enyl diphosphate reductase (322 aa).

C12 lines the [4Fe-4S] cluster pocket. The (2E)-4-hydroxy-3-methylbut-2-enyl diphosphate site is built by H43 and H81. Dimethylallyl diphosphate is bound by residues H43 and H81. The isopentenyl diphosphate site is built by H43 and H81. C103 is a binding site for [4Fe-4S] cluster. Residue H131 coordinates (2E)-4-hydroxy-3-methylbut-2-enyl diphosphate. Position 131 (H131) interacts with dimethylallyl diphosphate. Residue H131 coordinates isopentenyl diphosphate. The active-site Proton donor is the E133. Position 172 (T172) interacts with (2E)-4-hydroxy-3-methylbut-2-enyl diphosphate. C200 contributes to the [4Fe-4S] cluster binding site. (2E)-4-hydroxy-3-methylbut-2-enyl diphosphate is bound by residues S228, N230, and S273. Residues S228, N230, and S273 each contribute to the dimethylallyl diphosphate site. Isopentenyl diphosphate contacts are provided by S228, N230, and S273.

The protein belongs to the IspH family. [4Fe-4S] cluster is required as a cofactor.

It catalyses the reaction isopentenyl diphosphate + 2 oxidized [2Fe-2S]-[ferredoxin] + H2O = (2E)-4-hydroxy-3-methylbut-2-enyl diphosphate + 2 reduced [2Fe-2S]-[ferredoxin] + 2 H(+). It carries out the reaction dimethylallyl diphosphate + 2 oxidized [2Fe-2S]-[ferredoxin] + H2O = (2E)-4-hydroxy-3-methylbut-2-enyl diphosphate + 2 reduced [2Fe-2S]-[ferredoxin] + 2 H(+). The protein operates within isoprenoid biosynthesis; dimethylallyl diphosphate biosynthesis; dimethylallyl diphosphate from (2E)-4-hydroxy-3-methylbutenyl diphosphate: step 1/1. It functions in the pathway isoprenoid biosynthesis; isopentenyl diphosphate biosynthesis via DXP pathway; isopentenyl diphosphate from 1-deoxy-D-xylulose 5-phosphate: step 6/6. Catalyzes the conversion of 1-hydroxy-2-methyl-2-(E)-butenyl 4-diphosphate (HMBPP) into a mixture of isopentenyl diphosphate (IPP) and dimethylallyl diphosphate (DMAPP). Acts in the terminal step of the DOXP/MEP pathway for isoprenoid precursor biosynthesis. The sequence is that of 4-hydroxy-3-methylbut-2-enyl diphosphate reductase from Macrococcus caseolyticus (strain JCSC5402) (Macrococcoides caseolyticum).